Consider the following 353-residue polypeptide: Phospho-furanose lactonase (353 aa).

Zn(2+)-binding residues include histidine 25, histidine 27, lysine 153, histidine 186, and histidine 214. Lysine 153 carries the post-translational modification N6-carboxylysine. Lysine 244–tyrosine 245 provides a ligand contact to substrate. A Zn(2+)-binding site is contributed by aspartate 272. A substrate-binding site is contributed by arginine 275–tyrosine 278.

This sequence belongs to the metallo-dependent hydrolases superfamily. Phosphotriesterase family. Zn(2+) serves as cofactor.

The enzyme catalyses a 1,4-lactone + H2O = a 4-hydroxyacid + H(+). The catalysed reaction is D-xylono-1,4-lactone 5-phosphate + H2O = 5-phospho-D-xylonate + H(+). It carries out the reaction L-arabino-1,4-lactone 5-phosphate + H2O = 5-phospho-L-arabinonate + H(+). Functionally, catalyzes the hydrolysis of D-xylono-1,4-lactone-5-phosphate and L-arabino-1,4-lactone-5-phosphate. Also able to hydrolyze carboxy 1,4-lactones. The protein is Phospho-furanose lactonase of Mycoplasmopsis agalactiae (strain NCTC 10123 / CIP 59.7 / PG2) (Mycoplasma agalactiae).